Here is a 598-residue protein sequence, read N- to C-terminus: Proline--tRNA ligase (598 aa).

This sequence belongs to the class-II aminoacyl-tRNA synthetase family. ProS type 1 subfamily. As to quaternary structure, homodimer.

Its subcellular location is the cytoplasm. The enzyme catalyses tRNA(Pro) + L-proline + ATP = L-prolyl-tRNA(Pro) + AMP + diphosphate. Its function is as follows. Catalyzes the attachment of proline to tRNA(Pro) in a two-step reaction: proline is first activated by ATP to form Pro-AMP and then transferred to the acceptor end of tRNA(Pro). As ProRS can inadvertently accommodate and process non-cognate amino acids such as alanine and cysteine, to avoid such errors it has two additional distinct editing activities against alanine. One activity is designated as 'pretransfer' editing and involves the tRNA(Pro)-independent hydrolysis of activated Ala-AMP. The other activity is designated 'posttransfer' editing and involves deacylation of mischarged Ala-tRNA(Pro). The misacylated Cys-tRNA(Pro) is not edited by ProRS. The polypeptide is Proline--tRNA ligase (Synechococcus sp. (strain CC9311)).